The sequence spans 94 residues: Large ribosomal subunit protein bL27 (94 aa).

A propeptide spanning residues Met1–Phe9 is cleaved from the precursor. Residues Lys12 to Ala33 are disordered.

Belongs to the bacterial ribosomal protein bL27 family. Post-translationally, the N-terminus is cleaved by ribosomal processing cysteine protease Prp.

The sequence is that of Large ribosomal subunit protein bL27 from Lactococcus lactis subsp. lactis (strain IL1403) (Streptococcus lactis).